Reading from the N-terminus, the 515-residue chain is Maturase K (515 aa).

This sequence belongs to the intron maturase 2 family. MatK subfamily.

It is found in the plastid. Its subcellular location is the chloroplast. Functionally, usually encoded in the trnK tRNA gene intron. Probably assists in splicing its own and other chloroplast group II introns. The protein is Maturase K of Sorghum bicolor (Sorghum).